Here is a 622-residue protein sequence, read N- to C-terminus: Palmitoyltransferase ZDHHC13 (622 aa).

M1 is modified (N-acetylmethionine). Residues 1–291 (MEGPGLGSQC…RLWRWLQKCE (291 aa)) are Cytoplasmic-facing. ANK repeat units lie at residues 43-78 (PLIE…VRQP), 81-110 (ENVS…VVDQ), 115-144 (LNST…DPTL), 148-177 (EGFS…SVNM), 181-211 (NGQT…SLNV), 216-245 (HQNT…SLDI), and 249-277 (KGET…KMRA). Residues 292 to 312 (LFLLLMLSVITMWAIGYILDF) form a helical membrane-spanning segment. The Lumenal segment spans residues 313-320 (NSDSWLLK). Residues 321 to 341 (GCLLVTLFFLTSLFPRFLVGY) traverse the membrane as a helical segment. The Cytoplasmic segment spans residues 342 to 347 (KNLVYL). The chain crosses the membrane as a helical span at residues 348–368 (PTAFLLSSVFWIFMTWFILFF). Over 369-370 (PD) the chain is Lumenal. A helical transmembrane segment spans residues 371-391 (LAGAPFYFSFIFSIVAFLYFF). At 392–470 (YKTWATDPGF…RCIGFGNHHY (79 aa)) the chain is on the cytoplasmic side. One can recognise a DHHC domain in the interval 426-476 (TFCTSCLIRKPLRSLHCHVCNCCVARYDQHCLWTGRCIGFGNHHYYIFFLF). C456 (S-palmitoyl cysteine intermediate) is an active-site residue. The helical transmembrane segment at 471-491 (YIFFLFFLSMVCGWIIYGSFI) threads the bilayer. The Lumenal portion of the chain corresponds to 492–518 (YLSSHCATTFKEDGLWTYLNQIVACSP). Residues 519-539 (WVLYILMLATFHFSWSTFLLL) traverse the membrane as a helical segment. Over 540-622 (NQLFQIAFLG…PAREKVLRSV (83 aa)) the chain is Cytoplasmic.

Belongs to the DHHC palmitoyltransferase family. AKR/ZDHHC17 subfamily. In terms of assembly, interacts (via ANK repeats) with CLIP3. Interacts (via ANK repeats) with DNAJC5 (via C-terminus). Interacts (via ANK repeats) with HTT. Interacts (via ANK repeats) with MAP6. Interacts (via ANK repeats) with SNAP23. Interacts (via ANK repeats) with SNAP25. May interact (via ANK repeats) with SPRED2.

It localises to the golgi apparatus membrane. The protein localises to the cytoplasmic vesicle membrane. The enzyme catalyses L-cysteinyl-[protein] + hexadecanoyl-CoA = S-hexadecanoyl-L-cysteinyl-[protein] + CoA. In terms of biological role, palmitoyltransferase that could catalyze the addition of palmitate onto various protein substrates. Palmitoyltransferase for HTT and GAD2. May play a role in Mg(2+) transport. In Homo sapiens (Human), this protein is Palmitoyltransferase ZDHHC13.